The sequence spans 303 residues: Putative ring-cleaving dioxygenase MhqE (303 aa).

VOC domains lie at 5 to 129 (GLHH…IMED) and 150 to 266 (GMKG…IATD). Residues His-8, His-215, and Glu-262 each coordinate Fe cation.

The protein belongs to the extradiol ring-cleavage dioxygenase family. The cofactor is Fe(2+).

The protein resides in the cytoplasm. Putative ring-cleavage dioxygenase that may contribute to the degradation of aromatic compounds. The chain is Putative ring-cleaving dioxygenase MhqE (mhqE) from Bacillus subtilis (strain 168).